Here is a 392-residue protein sequence, read N- to C-terminus: Putative glutamate--cysteine ligase 2 (392 aa).

The segment at 1-21 (MMPVSGWRAVSSAPASSSAGR) is disordered. The segment covering 9–19 (AVSSAPASSSA) has biased composition (low complexity).

Belongs to the glutamate--cysteine ligase type 2 family. YbdK subfamily.

The enzyme catalyses L-cysteine + L-glutamate + ATP = gamma-L-glutamyl-L-cysteine + ADP + phosphate + H(+). ATP-dependent carboxylate-amine ligase which exhibits weak glutamate--cysteine ligase activity. The chain is Putative glutamate--cysteine ligase 2 from Mycobacterium ulcerans (strain Agy99).